The sequence spans 443 residues: ATP-dependent protease ATPase subunit HslU (443 aa).

ATP-binding positions include isoleucine 18, 60–65 (GVGKTE), aspartate 256, glutamate 321, and arginine 393.

This sequence belongs to the ClpX chaperone family. HslU subfamily. A double ring-shaped homohexamer of HslV is capped on each side by a ring-shaped HslU homohexamer. The assembly of the HslU/HslV complex is dependent on binding of ATP.

The protein resides in the cytoplasm. ATPase subunit of a proteasome-like degradation complex; this subunit has chaperone activity. The binding of ATP and its subsequent hydrolysis by HslU are essential for unfolding of protein substrates subsequently hydrolyzed by HslV. HslU recognizes the N-terminal part of its protein substrates and unfolds these before they are guided to HslV for hydrolysis. This is ATP-dependent protease ATPase subunit HslU from Wigglesworthia glossinidia brevipalpis.